A 235-amino-acid polypeptide reads, in one-letter code: Demethylmenaquinone methyltransferase (235 aa).

S-adenosyl-L-methionine contacts are provided by residues Thr-58, Asp-79, and 106–107 (NA).

This sequence belongs to the class I-like SAM-binding methyltransferase superfamily. MenG/UbiE family.

It carries out the reaction a 2-demethylmenaquinol + S-adenosyl-L-methionine = a menaquinol + S-adenosyl-L-homocysteine + H(+). It functions in the pathway quinol/quinone metabolism; menaquinone biosynthesis; menaquinol from 1,4-dihydroxy-2-naphthoate: step 2/2. Methyltransferase required for the conversion of demethylmenaquinol (DMKH2) to menaquinol (MKH2). This is Demethylmenaquinone methyltransferase from Shouchella clausii (strain KSM-K16) (Alkalihalobacillus clausii).